Reading from the N-terminus, the 646-residue chain is MFTLDSIVGAHINYALDKTAHLPETITNNVSNVEITLKDYQYFVSRVFIGLKNLNSMLLFWDTGMGKTLTAVYIIKHIKELFPRWIILIFIKKSLYIDPWLNTIRAFAPDISNNIIFVYYDSSSSLDKFVNIYRSIENSLNKKNRLLIIIDEVHKLISRSVKKDNSERNFTPTYKKLIKLANYEGNKILCMSATPIYNNIDEFNNLIGLLRPNVMTFKEEYIINGKLINFKEIRDTLLGLCSYKRLIEADSFTETNYVEGYAKKNVIYHNIIMSEEQSKLFNLAEKYDYKTELGGLKTMRRLVSSFAFYDLKIKGDLNNIEYNDMIKRKLAEFSEFTKTINFSNNFIEKFKRDDLKNDILLEDINNYNILYQYSCKYIEACRIILNSRGKVLLFEPLVNFEGIASLKYYFNCFNITYVEYSSKTLKTRDIEISEYNNYENNDGKNIKVCIFSYAGSEGISFKCVNDIIILDMPWNESELKQIMGRSIRLNSHNDLPLENRYVNVHFIISYTNNRKSVDKEILDIIKDKQSKINVVFDLLKSISIESIHNIHKYIEPVESETIFDTIRKTRMREMNISNVIVKIKLYPIMYCKDYDRATILKGLLNKENNIIYNEDTAVAKLTIENNKPVFIIVDDNLIYIADDYYE.

Positions 48-213 (FIGLKNLNSM…NNLIGLLRPN (166 aa)) constitute a Helicase ATP-binding domain. 61–68 (WDTGMGKT) contacts ATP. The short motif at 151–154 (DEVH) is the DEXH box element. One can recognise a Helicase C-terminal domain in the interval 377–540 (YIEACRIILN…KINVVFDLLK (164 aa)). Residues 466–532 (DIIILDMPWN…DIIKDKQSKI (67 aa)) form a binding to the cap-specific mRNA (nucleoside-2'-O-)-methyltransferase region.

This sequence belongs to the helicase family. NPH I subfamily. As to quaternary structure, monomer. Interacts (via C-terminus) with RAP94 (via N-terminus). Interacts with the cap-specific mRNA (nucleoside-2'-O-)-methyltransferase.

The protein localises to the virion. The enzyme catalyses a ribonucleoside 5'-triphosphate + H2O = a ribonucleoside 5'-diphosphate + phosphate + H(+). DNA-dependent ATPase required for providing the needed energy to achieve the termination of early transcripts. Acts in concert with the RAP94 subunit of the virion RNA polymerase and the capping enzyme/VTF to catalyze release of UUUUUNU-containing nascent RNA from the elongation complex. NPH-I must bind ssDNA in order to exhibit ATPase activity. This chain is Nucleoside triphosphatase I (NPH1), found in Heliothis armigera entomopoxvirus (HaEPV).